Reading from the N-terminus, the 352-residue chain is Protein Wnt-3a (352 aa).

An N-terminal signal peptide occupies residues M1–A18. Disulfide bonds link C77–C88, C128–C136, C138–C155, C203–C217, C205–C212, C297–C312, C327–C342, C329–C339, and C334–C335. An N-linked (GlcNAc...) asparagine glycan is attached at N87. S209 carries the O-palmitoleoyl serine lipid modification. Residue N298 is glycosylated (N-linked (GlcNAc...) asparagine).

It belongs to the Wnt family. In terms of processing, disulfide bonds have critical and distinct roles in secretion and activity. Loss of each conserved cysteine results in high molecular weight oxidized Wnt oligomers, which are formed through inter-Wnt disulfide bonding. Palmitoleoylation is required for efficient binding to frizzled receptors. Depalmitoleoylation leads to Wnt signaling pathway inhibition. In terms of tissue distribution, at neurula in anterior neural fold; at tailbud in dorsal midline of midbrain.

It is found in the secreted. The protein localises to the extracellular space. The protein resides in the extracellular matrix. Its function is as follows. Ligand for members of the frizzled family of seven transmembrane receptors. Functions in the canonical Wnt signaling pathway that results in activation of transcription factors of the TCF/LEF family. Required for normal embryonic mesoderm development and formation of caudal somites. Required for normal morphogenesis of the developing neural tube. The sequence is that of Protein Wnt-3a (wnt3a) from Xenopus laevis (African clawed frog).